Reading from the N-terminus, the 252-residue chain is Protein UL24 homolog (252 aa).

Positions 215–252 are disordered; the sequence is SVLTKTSGENRSRASRQVAKNAPKNRIRRTAKKDAKRQ. Positions 237–252 are enriched in basic residues; that stretch reads PKNRIRRTAKKDAKRQ.

Belongs to the herpesviridae UL24 family.

It localises to the virion. The protein localises to the host cytoplasm. Its subcellular location is the host nucleus. The protein resides in the host nucleolus. It is found in the host Golgi apparatus. May participate in nuclear egress of viral particles. Plays a role in the dispersal of several host nucleolar proteins including NCL/nucleolin and NPM1. Since deletion of host NCL/nucleolin negatively impact on nuclear egress, UL24 supposedly acts on this process through its effect on host nucleoli. The sequence is that of Protein UL24 homolog (U49) from Homo sapiens (Human).